A 221-amino-acid chain; its full sequence is Eukaryotic translation initiation factor 3 subunit K (221 aa).

Residues 46-207 enclose the PCI domain; it reads YDLEANLACL…NIKTKHITEK (162 aa).

Belongs to the eIF-3 subunit K family. Component of the eukaryotic translation initiation factor 3 (eIF-3) complex.

The protein resides in the cytoplasm. Functionally, component of the eukaryotic translation initiation factor 3 (eIF-3) complex, which is involved in protein synthesis of a specialized repertoire of mRNAs and, together with other initiation factors, stimulates binding of mRNA and methionyl-tRNAi to the 40S ribosome. The eIF-3 complex specifically targets and initiates translation of a subset of mRNAs involved in cell proliferation. The polypeptide is Eukaryotic translation initiation factor 3 subunit K (Culex quinquefasciatus (Southern house mosquito)).